Here is a 154-residue protein sequence, read N- to C-terminus: Ribonuclease H (154 aa).

In terms of domain architecture, RNase H type-1 spans 1 to 142 (MLKKIDLYTD…CDELAREAAS (142 aa)). Positions 10, 48, 70, and 134 each coordinate Mg(2+). The disordered stretch occupies residues 133 to 154 (CDELAREAASGKQLAEDTGYQP).

The protein belongs to the RNase H family. Monomer. Mg(2+) is required as a cofactor.

It localises to the cytoplasm. The enzyme catalyses Endonucleolytic cleavage to 5'-phosphomonoester.. Endonuclease that specifically degrades the RNA of RNA-DNA hybrids. In Aeromonas hydrophila subsp. hydrophila (strain ATCC 7966 / DSM 30187 / BCRC 13018 / CCUG 14551 / JCM 1027 / KCTC 2358 / NCIMB 9240 / NCTC 8049), this protein is Ribonuclease H.